The following is a 137-amino-acid chain: Holo-[acyl-carrier-protein] synthase (137 aa).

Mg(2+)-binding residues include D8 and E58.

This sequence belongs to the P-Pant transferase superfamily. AcpS family. Mg(2+) serves as cofactor.

The protein resides in the cytoplasm. It catalyses the reaction apo-[ACP] + CoA = holo-[ACP] + adenosine 3',5'-bisphosphate + H(+). Transfers the 4'-phosphopantetheine moiety from coenzyme A to a Ser of acyl-carrier-protein. The protein is Holo-[acyl-carrier-protein] synthase of Lactobacillus delbrueckii subsp. bulgaricus (strain ATCC BAA-365 / Lb-18).